The primary structure comprises 177 residues: tRNA (cytidine(56)-2'-O)-methyltransferase (177 aa).

S-adenosyl-L-methionine contacts are provided by residues leucine 83 and 108-112 (GAEKV).

Belongs to the aTrm56 family. In terms of assembly, homodimer.

It is found in the cytoplasm. It catalyses the reaction cytidine(56) in tRNA + S-adenosyl-L-methionine = 2'-O-methylcytidine(56) in tRNA + S-adenosyl-L-homocysteine + H(+). In terms of biological role, specifically catalyzes the AdoMet-dependent 2'-O-ribose methylation of cytidine at position 56 in tRNAs. In Nitrosopumilus maritimus (strain SCM1), this protein is tRNA (cytidine(56)-2'-O)-methyltransferase.